The following is a 72-amino-acid chain: Translation initiation factor IF-1 (72 aa).

One can recognise an S1-like domain in the interval 1–72 (MARDDVIEVD…DRGRITFRYK (72 aa)).

The protein belongs to the IF-1 family. As to quaternary structure, component of the 30S ribosomal translation pre-initiation complex which assembles on the 30S ribosome in the order IF-2 and IF-3, IF-1 and N-formylmethionyl-tRNA(fMet); mRNA recruitment can occur at any time during PIC assembly.

The protein resides in the cytoplasm. In terms of biological role, one of the essential components for the initiation of protein synthesis. Stabilizes the binding of IF-2 and IF-3 on the 30S subunit to which N-formylmethionyl-tRNA(fMet) subsequently binds. Helps modulate mRNA selection, yielding the 30S pre-initiation complex (PIC). Upon addition of the 50S ribosomal subunit IF-1, IF-2 and IF-3 are released leaving the mature 70S translation initiation complex. The polypeptide is Translation initiation factor IF-1 (Helicobacter acinonychis (strain Sheeba)).